Here is a 271-residue protein sequence, read N- to C-terminus: Phosphatidylinositol transfer protein beta isoform (271 aa).

Position 215 is an N6-acetyllysine (lysine 215). The residue at position 262 (serine 262) is a Phosphoserine.

This sequence belongs to the PtdIns transfer protein family. PI transfer class I subfamily. In terms of processing, constitutive phosphorylation of Ser-262 has no effect on phospholipid transfer activity but is required for Golgi targeting.

It localises to the golgi apparatus. It is found in the golgi apparatus membrane. The protein resides in the endoplasmic reticulum membrane. The enzyme catalyses a 1,2-diacyl-sn-glycero-3-phosphocholine(in) = a 1,2-diacyl-sn-glycero-3-phosphocholine(out). The catalysed reaction is a 1,2-diacyl-sn-glycero-3-phospho-(1D-myo-inositol)(in) = a 1,2-diacyl-sn-glycero-3-phospho-(1D-myo-inositol)(out). It catalyses the reaction an N-(acyl)-sphingosylphosphocholine(in) = an N-(acyl)-sphingosylphosphocholine(out). Its function is as follows. Catalyzes the transfer of phosphatidylinositol, phosphatidylcholine and sphingomyelin between membranes. Required for COPI-mediated retrograde transport from the Golgi to the endoplasmic reticulum; phosphatidylinositol and phosphatidylcholine transfer activity is essential for this function. This is Phosphatidylinositol transfer protein beta isoform (PITPNB) from Bos taurus (Bovine).